We begin with the raw amino-acid sequence, 243 residues long: tRNA (guanine-N(1)-)-methyltransferase (243 aa).

Residues Gly110 and 130–135 contribute to the S-adenosyl-L-methionine site; that span reads VGDYVM.

Belongs to the RNA methyltransferase TrmD family. Homodimer.

It localises to the cytoplasm. The catalysed reaction is guanosine(37) in tRNA + S-adenosyl-L-methionine = N(1)-methylguanosine(37) in tRNA + S-adenosyl-L-homocysteine + H(+). Functionally, specifically methylates guanosine-37 in various tRNAs. This chain is tRNA (guanine-N(1)-)-methyltransferase, found in Treponema denticola (strain ATCC 35405 / DSM 14222 / CIP 103919 / JCM 8153 / KCTC 15104).